Here is a 432-residue protein sequence, read N- to C-terminus: Malate dehydrogenase [NADP], chloroplastic (432 aa).

Residues 1 to 40 (MGLSTVYSPAGPRLVPAPLGRCRSAQPRRPRRAPLATVRC) constitute a chloroplast transit peptide. Positions 18–37 (PLGRCRSAQPRRPRRAPLAT) are disordered. Cys-67 and Cys-72 are oxidised to a cystine. 96 to 102 (GAAGMIS) lines the NADP(+) pocket. 2 residues coordinate substrate: Arg-177 and Arg-183. Position 190 (Asn-190) interacts with NADP(+). Position 197 (Gln-197) interacts with NAD(+). Residue 214–216 (VGN) participates in NADP(+) binding. Substrate is bound by residues Asn-216 and Arg-247. The Proton acceptor role is filled by His-272. Cys-408 and Cys-420 are disulfide-bonded.

This sequence belongs to the LDH/MDH superfamily. MDH type 2 family. Homodimer.

It is found in the plastid. The protein localises to the chloroplast. The catalysed reaction is (S)-malate + NADP(+) = oxaloacetate + NADPH + H(+). Its activity is regulated as follows. Chloroplast NADP-MDH is activated upon illumination. In order to be enzymatically active, disulfide bridges on the protein must be reduced by thioredoxin which receives electrons from ferredoxin and the electron transport system of photosynthesis. The chloroplastic, NADP-dependent form is essential for the photosynthesis C4 cycle, which allows plants to circumvent the problem of photorespiration. In C4 plants, NADP-MDH activity acts to convert oxaloacetate to malate in chloroplasts of mesophyll cells for transport to the bundle sheath cells. The sequence is that of Malate dehydrogenase [NADP], chloroplastic from Zea mays (Maize).